Consider the following 37-residue polypeptide: Cytochrome b6-f complex subunit 5 (37 aa).

The helical transmembrane segment at 5-25 (LLFGIVLGLIPITLAGLFVTA) threads the bilayer.

This sequence belongs to the PetG family. In terms of assembly, the 4 large subunits of the cytochrome b6-f complex are cytochrome b6, subunit IV (17 kDa polypeptide, PetD), cytochrome f and the Rieske protein, while the 4 small subunits are PetG, PetL, PetM and PetN. The complex functions as a dimer.

Its subcellular location is the plastid. It localises to the chloroplast thylakoid membrane. In terms of biological role, component of the cytochrome b6-f complex, which mediates electron transfer between photosystem II (PSII) and photosystem I (PSI), cyclic electron flow around PSI, and state transitions. PetG is required for either the stability or assembly of the cytochrome b6-f complex. This chain is Cytochrome b6-f complex subunit 5, found in Lemna minor (Common duckweed).